Consider the following 437-residue polypeptide: ATP-dependent RNA helicase RhlB (437 aa).

The Q motif signature appears at 9–37 (KKFADFPLHKEVQQALNEVGFEFCTPIQA). One can recognise a Helicase ATP-binding domain in the interval 40-219 (LPILLAKKDI…YDHMNEPEKV (180 aa)). 53–60 (AQTGTGKT) contacts ATP. The short motif at 165–168 (DEAD) is the DEAD box element. One can recognise a Helicase C-terminal domain in the interval 243–390 (KMPLLLSLLE…VTSYDSEALL (148 aa)). Positions 394–437 (PAPKRIHRKPSSHSRNSRDRSGSRPQGGHRGNAPRRHDKTRRHS) are disordered. The segment covering 425–437 (NAPRRHDKTRRHS) has biased composition (basic residues).

The protein belongs to the DEAD box helicase family. RhlB subfamily. As to quaternary structure, component of the RNA degradosome, which is a multiprotein complex involved in RNA processing and mRNA degradation.

The protein localises to the cytoplasm. It carries out the reaction ATP + H2O = ADP + phosphate + H(+). Functionally, DEAD-box RNA helicase involved in RNA degradation. Has RNA-dependent ATPase activity and unwinds double-stranded RNA. The chain is ATP-dependent RNA helicase RhlB from Shewanella piezotolerans (strain WP3 / JCM 13877).